Here is a 145-residue protein sequence, read N- to C-terminus: 3-dehydroquinate dehydratase (145 aa).

The Proton acceptor role is filled by tyrosine 23. The substrate site is built by asparagine 74, histidine 80, and aspartate 87. The active-site Proton donor is the histidine 100. Substrate is bound by residues 101–102 (IS) and arginine 111.

It belongs to the type-II 3-dehydroquinase family. As to quaternary structure, homododecamer.

The enzyme catalyses 3-dehydroquinate = 3-dehydroshikimate + H2O. It functions in the pathway metabolic intermediate biosynthesis; chorismate biosynthesis; chorismate from D-erythrose 4-phosphate and phosphoenolpyruvate: step 3/7. Its function is as follows. Catalyzes a trans-dehydration via an enolate intermediate. In Dictyoglomus turgidum (strain DSM 6724 / Z-1310), this protein is 3-dehydroquinate dehydratase.